A 330-amino-acid polypeptide reads, in one-letter code: Aspartate--ammonia ligase (330 aa).

Belongs to the class-II aminoacyl-tRNA synthetase family. AsnA subfamily.

The protein resides in the cytoplasm. It carries out the reaction L-aspartate + NH4(+) + ATP = L-asparagine + AMP + diphosphate + H(+). The protein operates within amino-acid biosynthesis; L-asparagine biosynthesis; L-asparagine from L-aspartate (ammonia route): step 1/1. The protein is Aspartate--ammonia ligase of Escherichia coli (strain SMS-3-5 / SECEC).